Here is a 78-residue protein sequence, read N- to C-terminus: uncharacterized protein (78 aa).

2 consecutive transmembrane segments (helical) span residues 13 to 35 (AGVGCVLMLMIIALVVFMLPTGI) and 50 to 72 (GTTFGILMLAALPPLTGAIFYYF).

The protein localises to the cell membrane. This is an uncharacterized protein from Pasteurella multocida (strain Pm70).